A 109-amino-acid polypeptide reads, in one-letter code: Hainantoxin-XVIII (109 aa).

The N-terminal stretch at Met-1–Ala-18 is a signal peptide. Residues Phe-19–Ala-46 constitute a propeptide that is removed on maturation. 4 disulfides stabilise this stretch: Cys-47/Cys-62, Cys-55/Cys-68, Cys-59/Cys-108, and Cys-61/Cys-81.

This sequence belongs to the neurotoxin 25 family. F7 subfamily. Expressed by the venom gland.

Its subcellular location is the secreted. In terms of biological role, putative ion channel inhibitor. In Cyriopagopus hainanus (Chinese bird spider), this protein is Hainantoxin-XVIII.